The chain runs to 466 residues: Asparagine--tRNA ligase (466 aa).

The protein belongs to the class-II aminoacyl-tRNA synthetase family. As to quaternary structure, homodimer.

Its subcellular location is the cytoplasm. The catalysed reaction is tRNA(Asn) + L-asparagine + ATP = L-asparaginyl-tRNA(Asn) + AMP + diphosphate + H(+). The chain is Asparagine--tRNA ligase from Shewanella pealeana (strain ATCC 700345 / ANG-SQ1).